We begin with the raw amino-acid sequence, 365 residues long: 3-isopropylmalate dehydrogenase (365 aa).

80 to 91 (GPKWGTGEVRPE) contributes to the NAD(+) binding site. Residues Arg-98, Arg-108, Arg-137, and Asp-226 each contribute to the substrate site. Residues Asp-226, Asp-251, and Asp-255 each coordinate Mg(2+). 290 to 301 (GSAPDLPKNKVN) is a binding site for NAD(+).

The protein belongs to the isocitrate and isopropylmalate dehydrogenases family. In terms of assembly, homodimer. It depends on Mg(2+) as a cofactor. Requires Mn(2+) as cofactor.

It localises to the cytoplasm. The catalysed reaction is (2R,3S)-3-isopropylmalate + NAD(+) = 4-methyl-2-oxopentanoate + CO2 + NADH. Its pathway is amino-acid biosynthesis; L-leucine biosynthesis; L-leucine from 3-methyl-2-oxobutanoate: step 3/4. In terms of biological role, catalyzes the oxidation of 3-carboxy-2-hydroxy-4-methylpentanoate (3-isopropylmalate) to 3-carboxy-4-methyl-2-oxopentanoate. The product decarboxylates to 4-methyl-2 oxopentanoate. This chain is 3-isopropylmalate dehydrogenase (LEU2), found in Candida boidinii (Yeast).